Consider the following 299-residue polypeptide: tRNA pseudouridine synthase B (299 aa).

The active-site Nucleophile is aspartate 45.

Belongs to the pseudouridine synthase TruB family. Type 1 subfamily.

It carries out the reaction uridine(55) in tRNA = pseudouridine(55) in tRNA. Functionally, responsible for synthesis of pseudouridine from uracil-55 in the psi GC loop of transfer RNAs. The chain is tRNA pseudouridine synthase B from Streptomyces griseus subsp. griseus (strain JCM 4626 / CBS 651.72 / NBRC 13350 / KCC S-0626 / ISP 5235).